The chain runs to 89 residues: Small ribosomal subunit protein uS14 (89 aa).

It belongs to the universal ribosomal protein uS14 family. In terms of assembly, part of the 30S ribosomal subunit. Contacts proteins S3 and S10.

Binds 16S rRNA, required for the assembly of 30S particles and may also be responsible for determining the conformation of the 16S rRNA at the A site. In Aster yellows witches'-broom phytoplasma (strain AYWB), this protein is Small ribosomal subunit protein uS14.